The primary structure comprises 140 residues: Methylglyoxal synthase (140 aa).

An MGS-like domain is found at 1 to 140 (MNIALIAHDE…KERQEKEGTP (140 aa)). Substrate-binding positions include histidine 8, lysine 12, 34-37 (TGTT), and 54-55 (SG). Residue aspartate 60 is the Proton donor/acceptor of the active site. Histidine 87 is a binding site for substrate.

The protein belongs to the methylglyoxal synthase family.

The catalysed reaction is dihydroxyacetone phosphate = methylglyoxal + phosphate. Functionally, catalyzes the formation of methylglyoxal from dihydroxyacetone phosphate. The sequence is that of Methylglyoxal synthase from Oceanobacillus iheyensis (strain DSM 14371 / CIP 107618 / JCM 11309 / KCTC 3954 / HTE831).